Reading from the N-terminus, the 559-residue chain is Proline--tRNA ligase (559 aa).

It belongs to the class-II aminoacyl-tRNA synthetase family. ProS type 1 subfamily. Homodimer.

The protein localises to the cytoplasm. It carries out the reaction tRNA(Pro) + L-proline + ATP = L-prolyl-tRNA(Pro) + AMP + diphosphate. In terms of biological role, catalyzes the attachment of proline to tRNA(Pro) in a two-step reaction: proline is first activated by ATP to form Pro-AMP and then transferred to the acceptor end of tRNA(Pro). As ProRS can inadvertently accommodate and process non-cognate amino acids such as alanine and cysteine, to avoid such errors it has two additional distinct editing activities against alanine. One activity is designated as 'pretransfer' editing and involves the tRNA(Pro)-independent hydrolysis of activated Ala-AMP. The other activity is designated 'posttransfer' editing and involves deacylation of mischarged Ala-tRNA(Pro). The misacylated Cys-tRNA(Pro) is not edited by ProRS. The sequence is that of Proline--tRNA ligase from Ruthia magnifica subsp. Calyptogena magnifica.